Consider the following 444-residue polypeptide: Pineal opsin (444 aa).

The segment at 1–20 is disordered; the sequence is MDALQESPPSHHSLPSALPS. Residues 1 to 46 lie on the Extracellular side of the membrane; the sequence is MDALQESPPSHHSLPSALPSATGGNGTVATMHNPFERPLEGIAPWN. A compositionally biased stretch (low complexity) spans 7–20; it reads SPPSHHSLPSALPS. The N-linked (GlcNAc...) asparagine glycan is linked to Asn25. A helical transmembrane segment spans residues 47 to 71; sequence FTMLAALMGTITALSLGENFAVIVV. At 72–83 the chain is on the cytoplasmic side; that stretch reads TARFRQLRQPLN. The helical transmembrane segment at 84-108 threads the bilayer; the sequence is YVLVNLAAADLLVSAIGGSVSFFTN. Residues 109–123 lie on the Extracellular side of the membrane; the sequence is IKGYFFLGVHACVLE. Cys120 and Cys197 are disulfide-bonded. A helical transmembrane segment spans residues 124 to 143; sequence GFAVTYFGVVALWSLALLAF. Residues 144–162 are Cytoplasmic-facing; the sequence is ERYFVICRPLGNFRLQSKH. A helical membrane pass occupies residues 163–186; it reads AVLGLAVVWVFSLACTLPPVLGWS. At 187 to 210 the chain is on the extracellular side; it reads SYRPSMIGTTCEPNWYSGELHDHT. A helical membrane pass occupies residues 211 to 238; that stretch reads FILMFFSTCFIFPLAVIFFSYGKLIQKL. At 239 to 260 the chain is on the cytoplasmic side; that stretch reads KKASETQRGLESTRRAEQQVTR. The helical transmembrane segment at 261–284 threads the bilayer; the sequence is MVVVMILAFLVCWMPYATFSIVVT. Topologically, residues 285-292 are extracellular; the sequence is ACPTIHLD. The chain crosses the membrane as a helical span at residues 293–317; that stretch reads PLLAAVPAFFSKTATVYNPVIYIFM. At Lys304 the chain carries N6-(retinylidene)lysine. Topologically, residues 318 to 444 are cytoplasmic; sequence NKQFRDCFVQ…SESVSKICPV (127 aa). Cys331 carries the S-palmitoyl cysteine lipid modification. Disordered stretches follow at residues 341-360 and 388-420; these read QTAG…QSPG and EPTM…QQGT. Residues 409–419 show a composition bias toward low complexity; the sequence is QQQGQQQQQQG.

This sequence belongs to the G-protein coupled receptor 1 family. Opsin subfamily. Phosphorylated on some or all of the serine and threonine residues present in the C-terminal region. As to expression, pineal gland.

Its subcellular location is the membrane. The chain is Pineal opsin from Petromyzon marinus (Sea lamprey).